A 240-amino-acid chain; its full sequence is Orotidine 5'-phosphate decarboxylase (240 aa).

Substrate-binding positions include Asp-16, Lys-37, 64-73, Thr-128, Arg-190, Gln-199, Gly-219, and Arg-220; that span reads DLKFHDIPTT. Lys-66 functions as the Proton donor in the catalytic mechanism.

Belongs to the OMP decarboxylase family. Type 1 subfamily. As to quaternary structure, homodimer.

It carries out the reaction orotidine 5'-phosphate + H(+) = UMP + CO2. Its pathway is pyrimidine metabolism; UMP biosynthesis via de novo pathway; UMP from orotate: step 2/2. In terms of biological role, catalyzes the decarboxylation of orotidine 5'-monophosphate (OMP) to uridine 5'-monophosphate (UMP). The sequence is that of Orotidine 5'-phosphate decarboxylase from Prochlorococcus marinus (strain SARG / CCMP1375 / SS120).